Here is a 172-residue protein sequence, read N- to C-terminus: Small ribosomal subunit protein uS13c (172 aa).

A chloroplast-targeting transit peptide spans 1–47 (MAHTLATPVAPSVSLICNTKLSVSLSSSSLAFRPVNPKNGGGLSIKC).

In terms of assembly, component of the chloroplast small ribosomal subunit (SSU). Mature 70S chloroplast ribosomes of higher plants consist of a small (30S) and a large (50S) subunit. The 30S small subunit contains 1 molecule of ribosomal RNA (16S rRNA) and 24 different proteins. The 50S large subunit contains 3 rRNA molecules (23S, 5S and 4.5S rRNA) and 33 different proteins. uS13c interacts with translation factor pY (PSRP1).

It localises to the plastid. The protein localises to the chloroplast. In terms of biological role, component of the chloroplast ribosome (chloro-ribosome), a dedicated translation machinery responsible for the synthesis of chloroplast genome-encoded proteins, including proteins of the transcription and translation machinery and components of the photosynthetic apparatus. This chain is Small ribosomal subunit protein uS13c (RPS13), found in Spinacia oleracea (Spinach).